The following is a 293-amino-acid chain: Proximal tail tube connector protein (293 aa).

The tract at residues 104 to 240 (TRLNTTGNKK…NANTTTNDKL (137 aa)) is disordered. 3 stretches are compositionally biased toward basic and acidic residues: residues 112–123 (KKNDTERNDNRD), 130–140 (ADGKSNTKTSD), and 162–173 (NFNRKIDSDQPD). Residues 174 to 184 (SRLNLTTNDGQ) are compositionally biased toward polar residues. The span at 196 to 238 (NNTNNKRNTTGTNNVTSSAESESTGSGTSDTVTTDNANTTTND) shows a compositional bias: low complexity.

Belongs to the phi29likevirus proximal tail tube connector protein family.

It localises to the virion. Its function is as follows. Forms the proximal part of the tail tube. The chain is Proximal tail tube connector protein (11) from Bacillus subtilis (Bacteriophage B103).